The sequence spans 133 residues: ATP synthase epsilon chain (133 aa).

This sequence belongs to the ATPase epsilon chain family. As to quaternary structure, F-type ATPases have 2 components, CF(1) - the catalytic core - and CF(0) - the membrane proton channel. CF(1) has five subunits: alpha(3), beta(3), gamma(1), delta(1), epsilon(1). CF(0) has three main subunits: a, b and c.

It is found in the cell membrane. Its function is as follows. Produces ATP from ADP in the presence of a proton gradient across the membrane. This is ATP synthase epsilon chain from Lawsonia intracellularis (strain PHE/MN1-00).